Reading from the N-terminus, the 354-residue chain is tRNA N6-adenosine threonylcarbamoyltransferase (354 aa).

2 residues coordinate Fe cation: His-111 and His-115. Substrate contacts are provided by residues 134–138 (LVSGG), Asp-167, Gly-180, and Asn-279. Fe cation is bound at residue Asp-319.

It belongs to the KAE1 / TsaD family. The cofactor is Fe(2+).

The protein localises to the cytoplasm. The catalysed reaction is L-threonylcarbamoyladenylate + adenosine(37) in tRNA = N(6)-L-threonylcarbamoyladenosine(37) in tRNA + AMP + H(+). In terms of biological role, required for the formation of a threonylcarbamoyl group on adenosine at position 37 (t(6)A37) in tRNAs that read codons beginning with adenine. Is involved in the transfer of the threonylcarbamoyl moiety of threonylcarbamoyl-AMP (TC-AMP) to the N6 group of A37, together with TsaE and TsaB. TsaD likely plays a direct catalytic role in this reaction. This chain is tRNA N6-adenosine threonylcarbamoyltransferase, found in Neisseria gonorrhoeae (strain ATCC 700825 / FA 1090).